The primary structure comprises 132 residues: Riboflavin kinase (132 aa).

13-18 (GLGHGS) is a binding site for CDP. Positions 40 and 42 each coordinate Mg(2+). FMN is bound by residues threonine 98 and glutamate 106. 111–114 (VYLR) is a CDP binding site.

It belongs to the archaeal riboflavin kinase family. Mg(2+) is required as a cofactor.

The enzyme catalyses riboflavin + CTP = CDP + FMN + H(+). It functions in the pathway cofactor biosynthesis; FMN biosynthesis; FMN from riboflavin (CTP route): step 1/1. Its function is as follows. Catalyzes the CTP-dependent phosphorylation of riboflavin (vitamin B2) to form flavin mononucleotide (FMN). This is Riboflavin kinase from Aeropyrum pernix (strain ATCC 700893 / DSM 11879 / JCM 9820 / NBRC 100138 / K1).